The sequence spans 249 residues: E3 ubiquitin-protein ligase RMA1 (249 aa).

The segment at 48 to 97 (CNICLDSVQEPVVTLCGHLFCWPCIHKWLDVQSFSTSDEYQRHRQCPVCK) adopts an RING-type zinc-finger fold. The chain crosses the membrane as a helical; Anchor for type IV membrane protein span at residues 231-248 (LGRIFFFFMCCVVLCLLL).

Ubiquitous. Highly expressed in roots.

It is found in the endoplasmic reticulum membrane. It carries out the reaction S-ubiquitinyl-[E2 ubiquitin-conjugating enzyme]-L-cysteine + [acceptor protein]-L-lysine = [E2 ubiquitin-conjugating enzyme]-L-cysteine + N(6)-ubiquitinyl-[acceptor protein]-L-lysine.. It functions in the pathway protein modification; protein ubiquitination. In terms of biological role, E3 ubiquitin-protein ligase that promotes the ubiquitination and proteasomal degradation of aquaporin PIP2-1. Forms a ubiquitin ligase complex in cooperation with the E2 enzymes UCB8/UCB10. The protein is E3 ubiquitin-protein ligase RMA1 (RMA1) of Arabidopsis thaliana (Mouse-ear cress).